Here is a 308-residue protein sequence, read N- to C-terminus: E3 ubiquitin-protein ligase RING2 (308 aa).

Serine 2 carries the N-acetylserine modification. The interaction with HIP2 stretch occupies residues 2–179 (SQAVQTNGTQ…AEDNGDSSHC (178 aa)). The residue at position 41 (serine 41) is a Phosphoserine. The segment at 51 to 91 (CPICLDMLKNTMTTKECLHRFCADCIITALRSGNKECPTCR) adopts an RING-type zinc-finger fold. Positions 93-98 (KLVSKR) are interaction with nucleosomes via an acidic patch on histone H2A and histone H2B. A Glycyl lysine isopeptide (Lys-Gly) (interchain with G-Cter in ubiquitin) cross-link involves residue lysine 112. Residues serine 143 and serine 168 each carry the phosphoserine modification. The interval 157-206 (QRGKKQQIENGSGAEDNGDSSHCSNASTHSNQEAGPSNKRTKTSDDSGLE) is disordered. Over residues 176–191 (SSHCSNASTHSNQEAG) the composition is skewed to polar residues. Lysine 249 is covalently cross-linked (Glycyl lysine isopeptide (Lys-Gly) (interchain with G-Cter in SUMO2)).

Component of chromatin-associated Polycomb (PcG) complexes. Component of a number of PRC1-like complexes; these complexes contain either the polycomb group ring finger protein PCGF1, or PCGF2, or PCGF3, or BMI1, or PCGF5, or PCGF6. Distinct PRC1-like complexes are composed of a RING1 subunit (RING1B or RING1A), one of the six PCGF proteins (PCGF1, PCGF2, PCGF3, BMI1, PCGF5 or PCGF6), one PHC protein (PHC1, PHC2 or PHC3) and one of the CBX proteins (CBX2, CBX4, CBX6, CBX7 or CBX8). Part of a complex that contains RNF2, UB2D3 and BMI1; within that complex RNF2 and BMI1 form a tight heterodimer, where UB2D3 interacts only with RNF2. The complex composed of RNF2, UB2D3 and BMI1 binds nucleosomes, and has activity only with nucleosomal histone H2A. Part of a complex that contains PCGF5, RNF2 and UBE2D3. Part of a complex that contains AUTS2, PCGF5, RNF2, CSNK2B and RYBP. Interacts with CBX6 and CBX8. Interacts with PHC1, PCGF2, RYBP, CBX7, CBX4, CBX2, RNF1/RING1, BMI1 and PHC2. Interaction with RYBP and CBX7 is mutually exclusive; both compete for the same binding site on RNF2. Component of repressive BCOR complex containing a Polycomb group subcomplex at least composed of RYBP, PCGF1, BCOR and RING1. Interacts with CBX2 and PHC1. Interacts with CHTOP. Interacts with AURKB. Part of the E2F6.com-1 complex in G0 phase composed of E2F6, MGA, MAX, TFDP1, CBX3, BAT8, EUHMTASE1, RNF1/RING1, RNF2/RING2, MBLR, L3MBTL2 and YAF2. Component of some MLL1/MLL complex, at least composed of the core components KMT2A/MLL1, ASH2L, HCFC1/HCF1, WDR5 and RBBP5, as well as the facultative components BACC1, CHD8, E2F6, HSP70, INO80C, KANSL1, LAS1L, MAX, MCRS1, MGA, MYST1/MOF, PELP1, PHF20, PRP31, RING2, RUVB1/TIP49A, RUVB2/TIP49B, SENP3, TAF1, TAF4, TAF6, TAF7, TAF9 and TEX10. Interacts with RYBP, HIP2 and TFCP2. Interacts with NUPR1. Interacts with SAMD7 in a PHC2-dependent manner. Monoubiquitinated, by auto-ubiquitination. Polyubiquitinated in the presence of UBE2D3 (in vitro).

The protein localises to the nucleus. Its subcellular location is the cytoplasm. The protein resides in the chromosome. It carries out the reaction S-ubiquitinyl-[E2 ubiquitin-conjugating enzyme]-L-cysteine + [acceptor protein]-L-lysine = [E2 ubiquitin-conjugating enzyme]-L-cysteine + N(6)-ubiquitinyl-[acceptor protein]-L-lysine.. It participates in protein modification; protein ubiquitination. E3 ubiquitin-protein ligase that mediates monoubiquitination of 'Lys-119' of histone H2A (H2AK119Ub), thereby playing a central role in histone code and gene regulation. H2AK119Ub gives a specific tag for epigenetic transcriptional repression and participates in X chromosome inactivation of female mammals. May be involved in the initiation of both imprinted and random X inactivation. Essential component of a Polycomb group (PcG) multiprotein PRC1-like complex, a complex class required to maintain the transcriptionally repressive state of many genes, including Hox genes, throughout development. PcG PRC1 complex acts via chromatin remodeling and modification of histones, rendering chromatin heritably changed in its expressibility. E3 ubiquitin-protein ligase activity is enhanced by BMI1/PCGF4. Acts as the main E3 ubiquitin ligase on histone H2A of the PRC1 complex, while RING1 may rather act as a modulator of RNF2/RING2 activity. Plays a role in the transcriptional repression of genes that are required for pluripotency in embryonic stem cells, thereby contributing to differentiation of the ectodermal and endodermal germ layers. Association with the chromosomal DNA is cell-cycle dependent. In resting B- and T-lymphocytes, interaction with AURKB leads to block its activity, thereby maintaining transcription in resting lymphocytes. Also acts as a negative regulator of autophagy by mediating ubiquitination of AMBRA1, leading to its subsequent degradation. This chain is E3 ubiquitin-protein ligase RING2 (Rnf2), found in Rattus norvegicus (Rat).